A 325-amino-acid polypeptide reads, in one-letter code: Tagatose 1,6-diphosphate aldolase (325 aa).

Belongs to the aldolase LacD family.

The enzyme catalyses D-tagatofuranose 1,6-bisphosphate = D-glyceraldehyde 3-phosphate + dihydroxyacetone phosphate. It functions in the pathway carbohydrate metabolism; D-tagatose 6-phosphate degradation; D-glyceraldehyde 3-phosphate and glycerone phosphate from D-tagatose 6-phosphate: step 2/2. In Staphylococcus haemolyticus (strain JCSC1435), this protein is Tagatose 1,6-diphosphate aldolase.